We begin with the raw amino-acid sequence, 150 residues long: Glycophorin-A (150 aa).

A signal peptide spans 1–19; the sequence is MYGKIIFVLLLSEIVSISA. At 20–91 the chain is on the extracellular side; that stretch reads LSTTEVAMHT…QLAHHFSEPE (72 aa). Residue Ser-21 is glycosylated (O-linked (GalNAc...) serine). Residues Thr-22, Thr-23, and Thr-29 are each glycosylated (O-linked (GalNAc...) threonine). O-linked (GalNAc...) serine glycosylation occurs at Ser-30. The O-linked (GalNAc...) threonine glycan is linked to Thr-31. Ser-32 carries O-linked (GalNAc...) serine glycosylation. An O-linked (GalNAc...) threonine glycan is attached at Thr-36. 2 O-linked (GalNAc...) serine glycosylation sites follow: Ser-38 and Ser-41. Thr-44 carries O-linked (GalNAc...) threonine glycosylation. Asn-45 carries an N-linked (GlcNAc...) asparagine glycan. 2 O-linked (GalNAc...) threonine glycosylation sites follow: Thr-52 and Thr-56. Ser-63 and Ser-66 each carry an O-linked (GalNAc...) serine glycan. Thr-69 carries O-linked (GalNAc...) threonine glycosylation. Residues 92–114 form a helical membrane-spanning segment; sequence ITLIIFGVMAGVIGTILLISYGI. Topologically, residues 115-150 are cytoplasmic; sequence RRLIKKSPSDVKPLPSPDTDVPLSSVEIENPETSDQ. The tract at residues 121-150 is disordered; it reads SPSDVKPLPSPDTDVPLSSVEIENPETSDQ. Phosphothreonine is present on Thr-133. A phosphoserine mark is found at Ser-138 and Ser-148.

The protein belongs to the glycophorin A family. As to quaternary structure, homodimer. Component of the ankyrin-1 complex in the erythrocyte, composed of ANK1, RHCE, RHAG, SLC4A1, EPB42, GYPA, GYPB and AQP1. Interacts with SLC4A1; a GYPA monomer is bound at each end of the SLC4A1 dimer forming a heterotetramer. (Microbial infection) Interacts with Streptococcus gordonii hsa protein. In terms of assembly, (Microbial infection) Interacts (in a sialic acid-independent manner) with P.falciparum MSP1 subunit p83. The major O-linked glycan are NeuAc-alpha-(2-3)-Gal-beta-(1-3)-[NeuAc-alpha-(2-6)]-GalNAcOH (about 78 %) and NeuAc-alpha-(2-3)-Gal-beta-(1-3)-GalNAcOH (17 %). Minor O-glycans (5 %) include NeuAc-alpha-(2-3)-Gal-beta-(1-3)-[NeuAc-alpha-(2-6)]-GalNAcOH NeuAc-alpha-(2-8)-NeuAc-alpha-(2-3)-Gal-beta-(1-3)-GalNAcOH. About 1% of all O-linked glycans carry blood group A, B and H determinants. They derive from a type-2 precursor core structure, Gal-beta-(1,3)-GlcNAc-beta-1-R, and the antigens are synthesized by addition of fucose (H antigen-specific) and then N-acetylgalactosamine (A antigen-specific) or galactose (B antigen-specific). Specifically O-linked-glycans are NeuAc-alpha-(2-3)-Gal-beta-(1-3)-GalNAcOH-(6-1)-GlcNAc-beta-(4-1)-[Fuc-alpha-(1-2)]-Gal-beta-(3-1)-GalNAc-alpha (about 1%, B antigen-specific) and NeuAc-alpha-(2-3)-Gal-beta-(1-3)-GalNAcOH-(6-1)-GlcNAc-beta-(4-1)-[Fuc-alpha-(1-2)]-Gal-beta (1 %, O antigen-, A antigen- and B antigen-specific).

It localises to the cell membrane. Functionally, component of the ankyrin-1 complex, a multiprotein complex involved in the stability and shape of the erythrocyte membrane. Glycophorin A is the major intrinsic membrane protein of the erythrocyte. The N-terminal glycosylated segment, which lies outside the erythrocyte membrane, has MN blood group receptors. Appears to be important for the function of SLC4A1 and is required for high activity of SLC4A1. May be involved in translocation of SLC4A1 to the plasma membrane. In terms of biological role, (Microbial infection) Appears to be a receptor for Hepatitis A virus (HAV). Its function is as follows. (Microbial infection) Receptor for P.falciparum erythrocyte-binding antigen 175 (EBA-175); binding of EBA-175 is dependent on sialic acid residues of the O-linked glycans. The protein is Glycophorin-A of Homo sapiens (Human).